The primary structure comprises 316 residues: Biotin synthase (316 aa).

In terms of domain architecture, Radical SAM core spans 36–260 (NKIQISMLLN…LMPKSYIRLA (225 aa)). The [4Fe-4S] cluster site is built by cysteine 51, cysteine 55, and cysteine 58. Cysteine 95, cysteine 126, cysteine 186, and arginine 258 together coordinate [2Fe-2S] cluster.

The protein belongs to the radical SAM superfamily. Biotin synthase family. In terms of assembly, homodimer. [4Fe-4S] cluster is required as a cofactor. It depends on [2Fe-2S] cluster as a cofactor.

The enzyme catalyses (4R,5S)-dethiobiotin + (sulfur carrier)-SH + 2 reduced [2Fe-2S]-[ferredoxin] + 2 S-adenosyl-L-methionine = (sulfur carrier)-H + biotin + 2 5'-deoxyadenosine + 2 L-methionine + 2 oxidized [2Fe-2S]-[ferredoxin]. It participates in cofactor biosynthesis; biotin biosynthesis; biotin from 7,8-diaminononanoate: step 2/2. Its function is as follows. Catalyzes the conversion of dethiobiotin (DTB) to biotin by the insertion of a sulfur atom into dethiobiotin via a radical-based mechanism. This Lawsonia intracellularis (strain PHE/MN1-00) protein is Biotin synthase.